A 640-amino-acid polypeptide reads, in one-letter code: Probable potassium transport system protein Kup 2 (640 aa).

12 consecutive transmembrane segments (helical) span residues 19–39 (LFSS…YGDI), 67–87 (VLSL…VVFV), 118–138 (GVVA…GVIT), 155–175 (EAAK…LFLV), 181–201 (GVIG…IAAL), 230–250 (FVGV…EALY), 265–285 (WLGL…ALLL), 307–327 (MVCL…SGVF), 355–375 (VYIP…VLVF), 384–404 (AYGI…FFVI), 415–435 (AVPL…ANLF), and 437–457 (IFDG…SMIT).

This sequence belongs to the HAK/KUP transporter (TC 2.A.72) family.

It is found in the cell inner membrane. It carries out the reaction K(+)(in) + H(+)(in) = K(+)(out) + H(+)(out). Its function is as follows. Transport of potassium into the cell. Likely operates as a K(+):H(+) symporter. In Syntrophobacter fumaroxidans (strain DSM 10017 / MPOB), this protein is Probable potassium transport system protein Kup 2.